The chain runs to 631 residues: Glutamine--fructose-6-phosphate aminotransferase [isomerizing] (631 aa).

Cys2 acts as the Nucleophile; for GATase activity in catalysis. The region spanning 2–225 is the Glutamine amidotransferase type-2 domain; it reads CGIVGYIGTQ…NGEIARLTPL (224 aa). SIS domains are found at residues 298 to 446 and 480 to 621; these read LDPQ…QRHS and LAHE…VDQP. Lys626 (for Fru-6P isomerization activity) is an active-site residue.

In terms of assembly, homodimer.

The protein localises to the cytoplasm. The catalysed reaction is D-fructose 6-phosphate + L-glutamine = D-glucosamine 6-phosphate + L-glutamate. Functionally, catalyzes the first step in hexosamine metabolism, converting fructose-6P into glucosamine-6P using glutamine as a nitrogen source. The protein is Glutamine--fructose-6-phosphate aminotransferase [isomerizing] of Synechocystis sp. (strain ATCC 27184 / PCC 6803 / Kazusa).